A 228-amino-acid polypeptide reads, in one-letter code: ATP-dependent dethiobiotin synthetase BioD 1 (228 aa).

13-18 lines the ATP pocket; the sequence is EVGKTV. Thr17 serves as a coordination point for Mg(2+). Residue Lys38 is part of the active site. Residue Ser42 participates in substrate binding. Residues Asp55, 116–119, 176–177, and 205–207 each bind ATP; these read EGAG, ND, and PWL. The Mg(2+) site is built by Asp55 and Glu116.

This sequence belongs to the dethiobiotin synthetase family. In terms of assembly, homodimer. Mg(2+) is required as a cofactor.

Its subcellular location is the cytoplasm. It catalyses the reaction (7R,8S)-7,8-diammoniononanoate + CO2 + ATP = (4R,5S)-dethiobiotin + ADP + phosphate + 3 H(+). It participates in cofactor biosynthesis; biotin biosynthesis; biotin from 7,8-diaminononanoate: step 1/2. Catalyzes a mechanistically unusual reaction, the ATP-dependent insertion of CO2 between the N7 and N8 nitrogen atoms of 7,8-diaminopelargonic acid (DAPA, also called 7,8-diammoniononanoate) to form a ureido ring. The polypeptide is ATP-dependent dethiobiotin synthetase BioD 1 (Salmonella typhimurium (strain LT2 / SGSC1412 / ATCC 700720)).